Here is an 89-residue protein sequence, read N- to C-terminus: Small ribosomal subunit protein uS15 (89 aa).

Belongs to the universal ribosomal protein uS15 family. As to quaternary structure, part of the 30S ribosomal subunit. Forms a bridge to the 50S subunit in the 70S ribosome, contacting the 23S rRNA.

Functionally, one of the primary rRNA binding proteins, it binds directly to 16S rRNA where it helps nucleate assembly of the platform of the 30S subunit by binding and bridging several RNA helices of the 16S rRNA. Forms an intersubunit bridge (bridge B4) with the 23S rRNA of the 50S subunit in the ribosome. The protein is Small ribosomal subunit protein uS15 of Parabacteroides distasonis (strain ATCC 8503 / DSM 20701 / CIP 104284 / JCM 5825 / NCTC 11152).